A 218-amino-acid chain; its full sequence is N-(5'-phosphoribosyl)anthranilate isomerase (218 aa).

It belongs to the TrpF family.

It catalyses the reaction N-(5-phospho-beta-D-ribosyl)anthranilate = 1-(2-carboxyphenylamino)-1-deoxy-D-ribulose 5-phosphate. The protein operates within amino-acid biosynthesis; L-tryptophan biosynthesis; L-tryptophan from chorismate: step 3/5. In Bordetella bronchiseptica (strain ATCC BAA-588 / NCTC 13252 / RB50) (Alcaligenes bronchisepticus), this protein is N-(5'-phosphoribosyl)anthranilate isomerase.